A 335-amino-acid polypeptide reads, in one-letter code: Pregnancy-specific beta-1-glycoprotein 5 (335 aa).

An N-terminal signal peptide occupies residues 1–34 (MGPLSAPPCTQHITWKGLLLTASLLNFWNLPITA). The Ig-like V-type domain maps to 35–144 (QVTIEALPPK…TGYFTFNLYL (110 aa)). N-linked (GlcNAc...) asparagine glycans are attached at residues asparagine 104 and asparagine 111. The Cell attachment site motif lies at 127 to 129 (RGD). Ig-like C2-type domains follow at residues 147–234 (PKPY…VTLN) and 239–317 (PDLP…KSMT). 2 cysteine pairs are disulfide-bonded: cysteine 169/cysteine 217 and cysteine 261/cysteine 301. N-linked (GlcNAc...) asparagine glycosylation is found at asparagine 175 and asparagine 210.

This sequence belongs to the immunoglobulin superfamily. CEA family. As to expression, synthesized by syncytiotrophoblast of the placenta.

Its subcellular location is the secreted. The polypeptide is Pregnancy-specific beta-1-glycoprotein 5 (PSG5) (Homo sapiens (Human)).